Consider the following 397-residue polypeptide: Tryptophan synthase beta chain (397 aa).

Lysine 87 carries the N6-(pyridoxal phosphate)lysine modification.

The protein belongs to the TrpB family. Tetramer of two alpha and two beta chains. It depends on pyridoxal 5'-phosphate as a cofactor.

The catalysed reaction is (1S,2R)-1-C-(indol-3-yl)glycerol 3-phosphate + L-serine = D-glyceraldehyde 3-phosphate + L-tryptophan + H2O. It participates in amino-acid biosynthesis; L-tryptophan biosynthesis; L-tryptophan from chorismate: step 5/5. Functionally, the beta subunit is responsible for the synthesis of L-tryptophan from indole and L-serine. This chain is Tryptophan synthase beta chain, found in Cronobacter sakazakii (strain ATCC BAA-894) (Enterobacter sakazakii).